Consider the following 58-residue polypeptide: Large ribosomal subunit protein bL32 (58 aa).

The protein belongs to the bacterial ribosomal protein bL32 family.

This Caldicellulosiruptor saccharolyticus (strain ATCC 43494 / DSM 8903 / Tp8T 6331) protein is Large ribosomal subunit protein bL32.